Here is a 387-residue protein sequence, read N- to C-terminus: Pepsin-3 (387 aa).

Positions 1–15 (MKWLLLLGLLALSEC) are cleaved as a signal peptide. The propeptide at 16–59 (IIHKVPLVRKKSLRKNLIEKGLLKDYLKTHTPNLATKYLPKAAF) is activation peptide. The 310-residue stretch at 75–384 (YFGTIGIGTP…DRANNQLGLA (310 aa)) folds into the Peptidase A1 domain. Residue Asp-93 is part of the active site. Disulfide bonds link Cys-106-Cys-111 and Cys-267-Cys-271. Asp-276 is an active-site residue. Residues Cys-310 and Cys-343 are joined by a disulfide bond.

It belongs to the peptidase A1 family.

It is found in the secreted. It carries out the reaction Preferential cleavage: hydrophobic, preferably aromatic, residues in P1 and P1' positions. Cleaves 1-Phe-|-Val-2, 4-Gln-|-His-5, 13-Glu-|-Ala-14, 14-Ala-|-Leu-15, 15-Leu-|-Tyr-16, 16-Tyr-|-Leu-17, 23-Gly-|-Phe-24, 24-Phe-|-Phe-25 and 25-Phe-|-Tyr-26 bonds in the B chain of insulin.. Its function is as follows. Shows particularly broad specificity; although bonds involving phenylalanine and leucine are preferred, many others are also cleaved to some extent. This chain is Pepsin-3, found in Oryctolagus cuniculus (Rabbit).